Reading from the N-terminus, the 194-residue chain is Kallikrein-like enzyme LV-Ka (194 aa).

Intrachain disulfides connect Cys7–Cys99, Cys44–Cys192, Cys78–Cys146, Cys110–Cys125, and Cys136–Cys161. The Peptidase S1 domain occupies 36-185 (LNQEDKFICP…YTEWIQSIIA (150 aa)). The active-site Charge relay system is Ser140.

Belongs to the peptidase S1 family. Snake venom subfamily. Monomer. Post-translationally, N-glycosylated. As to expression, expressed by the venom gland.

The protein localises to the secreted. With respect to regulation, completely inhibited by the serine protease inhibitors NPGB and PMSF, partially inhibited by benzamidines, and weakly or not inhibited by SBTI and EDTA. Shows kallikrein-like activity, releasing bradykinin from kininogen. Also activates plasminogen, which is also a plasma kallikrein activity. Is active upon the kallikrein substrates S-2266 and S-2302, suggesting a preference for Arg in P1 position. In vivo, lowers blood pressure after intravenous injection in rat. This chain is Kallikrein-like enzyme LV-Ka, found in Lachesis muta muta (Bushmaster).